A 251-amino-acid polypeptide reads, in one-letter code: Tropomyosin-2 (251 aa).

Residues 1 to 251 adopt a coiled-coil conformation; that stretch reads MSGEEKLGKL…DTVADEPDDE (251 aa).

This sequence belongs to the tropomyosin family. Homodimer. As to expression, striated muscle specific.

This is Tropomyosin-2 (TPM2) from Podocoryna carnea (Hydrozoan).